Consider the following 388-residue polypeptide: Cobalt-precorrin-5B C(1)-methyltransferase (388 aa).

Belongs to the CbiD family.

The catalysed reaction is Co-precorrin-5B + S-adenosyl-L-methionine = Co-precorrin-6A + S-adenosyl-L-homocysteine. It functions in the pathway cofactor biosynthesis; adenosylcobalamin biosynthesis; cob(II)yrinate a,c-diamide from sirohydrochlorin (anaerobic route): step 6/10. Catalyzes the methylation of C-1 in cobalt-precorrin-5B to form cobalt-precorrin-6A. This chain is Cobalt-precorrin-5B C(1)-methyltransferase, found in Rubrobacter xylanophilus (strain DSM 9941 / JCM 11954 / NBRC 16129 / PRD-1).